A 515-amino-acid polypeptide reads, in one-letter code: Cytochrome P450 monooxygenase nsrP (515 aa).

A helical membrane pass occupies residues 20–40 (FGTAAFLAVLLSALAFLSYTP). N-linked (GlcNAc...) asparagine glycosylation is found at Asn-84, Asn-406, and Asn-411. Position 452 (Cys-452) interacts with heme.

It belongs to the cytochrome P450 family. Heme is required as a cofactor.

The protein localises to the membrane. Its pathway is secondary metabolite biosynthesis. Its function is as follows. Cytochrome P450 monooxygenase; part of the gene cluster that mediates the biosynthesis of the tetrahydroxanthone dimer neosartorin, which exhibits antibacterial activity. The two different monomeric units appear to be synthesized by the same set of enzymes, among which the Baeyer-Villiger monooxygenase nsrF is the key enzyme for the divergence of the biosynthetic routes. The pathway begins with the synthesis of atrochrysone thioester by the polyketide synthase nsrB. The atrochrysone carboxyl ACP thioesterase nsrC then breaks the thioester bond and releases the atrochrysone carboxylic acid from AacuL. Atrochrysone carboxylic acid is decarboxylated by the decarboxylase nsrE, and oxidized by the anthrone oxygenase nsrD to yield emodin. Emodin is then reduced to emodin hydroquinone by the oxidoreductase nsrR. A-ring reduction by the short chain dehydrogenase nsrJ, dehydration by the scytalone dehydratase-like protein nsrI and probable spontaneous re-oxidation, results in overall deoxygenation to chrysophanol. The Baeyer-Villiger monooxygenase nsrF accepts chrysophanol as a substrate to insert one oxygen atom at two different positions to yield the precursors of both monomric units. NsrF is promiscuous/flexible in interacting with the 2 (non methylated and methylated) aromatic rings of chrysophanol, thus diverging the biosynthetic pathway at this point. After the hydrolysis of the lactones, methylesterification by the methyltransferase nsrG yields respectively moniliphenone and 2,2',6'-trihydroxy-4-methyl-6-methoxya-cyldiphenylmethanone. The next steps are the hydroxylation by the FAD-dependent monooxygenase nsrK, followed by isomerization by the monooxygenase nsrQ. The short chain dehydrogenase/reductase nsrO then catalyzes the C-5 ketoreduction to give the xanthone skeleton of blennolide C and 5-acetylblennolide A. The acetyltransferase nsrL has a strict substrate specificity and uses only blennolide A but not blennolide C to yield 5-acetylblennolide A as the single-acetylated product. In the final step of the biosynthesis, the heterodimerization of the 2 xanthones, blennolide C and 5-acetylblennolide A, is catalyzed by the cytochrome P450 monooxygenase nsrP. NsrP can utilize at least three different xanthones as its substrates to perform the dimerization reaction. This Aspergillus novofumigatus (strain IBT 16806) protein is Cytochrome P450 monooxygenase nsrP.